We begin with the raw amino-acid sequence, 229 residues long: 2-C-methyl-D-erythritol 4-phosphate cytidylyltransferase (229 aa).

The protein belongs to the IspD/TarI cytidylyltransferase family. IspD subfamily.

It carries out the reaction 2-C-methyl-D-erythritol 4-phosphate + CTP + H(+) = 4-CDP-2-C-methyl-D-erythritol + diphosphate. It functions in the pathway isoprenoid biosynthesis; isopentenyl diphosphate biosynthesis via DXP pathway; isopentenyl diphosphate from 1-deoxy-D-xylulose 5-phosphate: step 2/6. Catalyzes the formation of 4-diphosphocytidyl-2-C-methyl-D-erythritol from CTP and 2-C-methyl-D-erythritol 4-phosphate (MEP). The polypeptide is 2-C-methyl-D-erythritol 4-phosphate cytidylyltransferase (Clostridium botulinum (strain Loch Maree / Type A3)).